The sequence spans 585 residues: MGPAAGNLVRAVLALCWLAEHCAGISSIDIERPGDGRCQPIEIPMCKDIGYNMTRMPNLMGHENQREAAIQLHEFAPLVEYGCHGHLKFFLCSLYAPMCTEQVSTPIPACRVMCEQARLKCSPIMEQFNFKWPDSLDCSKLPNKNDPNYLCMEAPNNGSDEPPRGSSMLPPMFRPQRPSTGHDLQQHKDSLSRTSCENPGKFHHVEKSASCAPLCTPGVDVYWSKDDKQFAVIWIAIWSILCFFSSAFTVLTFLIDPQRFKYPERPIIFLSMCYCVYSVGYIIRLFSGAESIACDRDSGQLYVIQEGLESTGCTIVFLVLYYFGMASSLWWVILTLTWFLAAGKKWGHEAIEANSSYFHLAAWAIPAVKTIMILVMRRVAGDELTGLCYVGSMDVNALTGFVLIPLACYLIIGTSFILSGFVALFHIRRVMKTGGENTDKLEKLMVRIGVFSVLYTVPATCVIACYFYERLNMDYWKIVASQQKCKMNNQTKNLDCMMNNSIPAVEIFMVKIFMLLVVGITSGMWIWTSKTLQSWQNVCSRRLKKRSRRKPASVITSSGIYKKPQHPQKTHLAKYESTLQPPTCV.

The first 24 residues, Met1–Gly24, serve as a signal peptide directing secretion. The Extracellular portion of the chain corresponds to Ile25–Gln229. Residues Pro33 to Ala154 enclose the FZ domain. 5 cysteine pairs are disulfide-bonded: Cys38-Cys99, Cys46-Cys92, Cys83-Cys121, Cys110-Cys151, and Cys114-Cys138. Residue Asn52 is glycosylated (N-linked (GlcNAc...) asparagine). Positions Pro155–Ser195 are disordered. Asn157 is a glycosylation site (N-linked (GlcNAc...) asparagine). Residues Phe230 to Val250 traverse the membrane as a helical segment. Topologically, residues Leu251–Arg265 are cytoplasmic. A helical membrane pass occupies residues Pro266 to Phe286. Over Ser287–Thr314 the chain is Extracellular. The helical transmembrane segment at Ile315 to Thr335 threads the bilayer. Residues Leu336 to Ser355 are Cytoplasmic-facing. The chain crosses the membrane as a helical span at residues Ser356–Met376. Topologically, residues Arg377 to Ala397 are extracellular. The helical transmembrane segment at Leu398 to Leu418 threads the bilayer. Over Ser419–Arg447 the chain is Cytoplasmic. The chain crosses the membrane as a helical span at residues Ile448–Tyr468. The Extracellular portion of the chain corresponds to Glu469 to Glu506. Asn489 and Asn499 each carry an N-linked (GlcNAc...) asparagine glycan. The chain crosses the membrane as a helical span at residues Ile507–Trp527. The Cytoplasmic portion of the chain corresponds to Thr528–Val585. Residues Lys530–Trp535 carry the Lys-Thr-X-X-X-Trp motif, mediates interaction with the PDZ domain of Dvl family members motif. The short motif at Thr583–Val585 is the PDZ-binding element.

This sequence belongs to the G-protein coupled receptor Fz/Smo family. As to quaternary structure, interacts with WNT7A. Expressed in the dorsal ectoderm overlying the developing spinal cord.

Its subcellular location is the cell membrane. Functionally, receptor for Wnt proteins. Functions in the canonical Wnt/beta-catenin signaling pathway. Activation by WNT7A induces expression of beta-catenin target genes. The canonical Wnt/beta-catenin signaling pathway leads to the activation of disheveled proteins, inhibition of GSK-3 kinase, nuclear accumulation of beta-catenin and activation of Wnt target genes. A second signaling pathway involving PKC and calcium fluxes has been seen for some family members, but it is not yet clear if it represents a distinct pathway or if it can be integrated in the canonical pathway, as PKC seems to be required for Wnt-mediated inactivation of GSK-3 kinase. Both pathways seem to involve interactions with G-proteins. May be involved in transduction and intercellular transmission of polarity information during tissue morphogenesis and/or in differentiated tissues. In Gallus gallus (Chicken), this protein is Frizzled-10 (FZD10).